Consider the following 85-residue polypeptide: Beta-defensin 18 (85 aa).

The first 23 residues, 1–23 (MQSAMKLFFIFLIFVFSVSCGPS), serve as a signal peptide directing secretion. 3 cysteine pairs are disulfide-bonded: C39–C65, C46–C60, and C50–C66.

The protein belongs to the beta-defensin family.

The protein localises to the secreted. In terms of biological role, has antibacterial activity. The protein is Beta-defensin 18 (Defb18) of Rattus norvegicus (Rat).